Reading from the N-terminus, the 209-residue chain is Cytidylate kinase (209 aa).

ATP is bound at residue 7-15 (GPAASGKGT).

Belongs to the cytidylate kinase family. Type 1 subfamily.

The protein localises to the cytoplasm. The enzyme catalyses CMP + ATP = CDP + ADP. The catalysed reaction is dCMP + ATP = dCDP + ADP. The sequence is that of Cytidylate kinase from Afipia carboxidovorans (strain ATCC 49405 / DSM 1227 / KCTC 32145 / OM5) (Oligotropha carboxidovorans).